We begin with the raw amino-acid sequence, 134 residues long: Ribosome-binding factor A (134 aa).

The protein belongs to the RbfA family. In terms of assembly, monomer. Binds 30S ribosomal subunits, but not 50S ribosomal subunits or 70S ribosomes.

The protein resides in the cytoplasm. In terms of biological role, one of several proteins that assist in the late maturation steps of the functional core of the 30S ribosomal subunit. Associates with free 30S ribosomal subunits (but not with 30S subunits that are part of 70S ribosomes or polysomes). Required for efficient processing of 16S rRNA. May interact with the 5'-terminal helix region of 16S rRNA. The sequence is that of Ribosome-binding factor A from Cyanothece sp. (strain PCC 7425 / ATCC 29141).